Consider the following 234-residue polypeptide: Orotidine 5'-phosphate decarboxylase (234 aa).

Residues Asp11, Lys33, 60 to 69, Thr120, Arg181, Gln190, Gly210, and Arg211 contribute to the substrate site; that span reads DLKFHDIPNT. Catalysis depends on Lys62, which acts as the Proton donor.

It belongs to the OMP decarboxylase family. Type 1 subfamily. As to quaternary structure, homodimer.

The enzyme catalyses orotidine 5'-phosphate + H(+) = UMP + CO2. The protein operates within pyrimidine metabolism; UMP biosynthesis via de novo pathway; UMP from orotate: step 2/2. Functionally, catalyzes the decarboxylation of orotidine 5'-monophosphate (OMP) to uridine 5'-monophosphate (UMP). The sequence is that of Orotidine 5'-phosphate decarboxylase from Shewanella sediminis (strain HAW-EB3).